The sequence spans 213 residues: Outer-membrane lipoprotein carrier protein (213 aa).

An N-terminal signal peptide occupies residues 1-18 (MKYFATICIAAYAGLAGA).

This sequence belongs to the LolA family. Monomer.

Its subcellular location is the periplasm. In terms of biological role, participates in the translocation of lipoproteins from the inner membrane to the outer membrane. Only forms a complex with a lipoprotein if the residue after the N-terminal Cys is not an aspartate (The Asp acts as a targeting signal to indicate that the lipoprotein should stay in the inner membrane). This chain is Outer-membrane lipoprotein carrier protein, found in Albidiferax ferrireducens (strain ATCC BAA-621 / DSM 15236 / T118) (Rhodoferax ferrireducens).